The sequence spans 341 residues: Elongation factor Ts (341 aa).

Residues 80–83 (TDFV) form an involved in Mg(2+) ion dislocation from EF-Tu region.

This sequence belongs to the EF-Ts family.

It localises to the cytoplasm. Its function is as follows. Associates with the EF-Tu.GDP complex and induces the exchange of GDP to GTP. It remains bound to the aminoacyl-tRNA.EF-Tu.GTP complex up to the GTP hydrolysis stage on the ribosome. The polypeptide is Elongation factor Ts (Lactobacillus gasseri (strain ATCC 33323 / DSM 20243 / BCRC 14619 / CIP 102991 / JCM 1131 / KCTC 3163 / NCIMB 11718 / NCTC 13722 / AM63)).